The sequence spans 343 residues: Labda-7,13(16),14-triene synthase (343 aa).

Mg(2+)-binding residues include aspartate 114 and glutamate 119. Positions 114–119 (DDVHVE) match the DDXXXE motif motif. Residue arginine 206 participates in substrate binding. Residues asparagine 252, serine 256, and glutamate 260 each coordinate Mg(2+). Residues 252-260 (NDLYSFAYE) carry the NXXXSXXXE motif motif.

Belongs to the terpene synthase family. It depends on Mg(2+) as a cofactor.

It catalyses the reaction (13E)-labda-7,13-dien-15-yl diphosphate = labda-7,13(16),14-triene + diphosphate. Involved in the biosynthesis of the labdane-type bicyclic diterpene labda-7,13(16),14-triene. Catalyzes the conversion of labda-7,13(E)-dienyl diphosphate to yield labda-7,13(16),14-triene. This Streptomyces clavuligerus protein is Labda-7,13(16),14-triene synthase.